A 476-amino-acid chain; its full sequence is Surface membrane glycoprotein GP46/M-2 (476 aa).

The signal sequence occupies residues 1-32 (MAQCVRRLVLAAPLAAVVALLLCTSSAPVARA). 4 consecutive repeat copies span residues 107–130 (VMIL…PSWS), 131–154 (SMKH…PEWS), 155–178 (EMTS…TSWS), and 179–202 (SMPK…DSWR). The interval 107-202 (VMILALDFGA…FCGCVPDSWR (96 aa)) is 4 X 24 AA tandem repeats. 2 disordered regions span residues 231 to 255 (APGT…PSPG) and 348 to 370 (ALSP…RRRA). Cys452 carries the GPI-anchor amidated cysteine lipid modification. Positions 453-476 (PALFDGARLRCCALVVCAGAAPAG) are cleaved as a propeptide — removed in mature form.

The protein resides in the cell membrane. The sequence is that of Surface membrane glycoprotein GP46/M-2 from Leishmania amazonensis.